The following is a 297-amino-acid chain: tRNA pseudouridine synthase B (297 aa).

Residue Asp-44 is the Nucleophile of the active site.

It belongs to the pseudouridine synthase TruB family. Type 1 subfamily.

It catalyses the reaction uridine(55) in tRNA = pseudouridine(55) in tRNA. In terms of biological role, responsible for synthesis of pseudouridine from uracil-55 in the psi GC loop of transfer RNAs. The sequence is that of tRNA pseudouridine synthase B from Corynebacterium aurimucosum (strain ATCC 700975 / DSM 44827 / CIP 107346 / CN-1) (Corynebacterium nigricans).